Consider the following 109-residue polypeptide: Spermidine export protein MdtI (109 aa).

A run of 4 helical transmembrane segments spans residues 6-26 (FYHI…NILL), 35-55 (VWLG…LAQA), 64-84 (AYAL…WILF), and 88-108 (LNYK…MIKL).

It belongs to the drug/metabolite transporter (DMT) superfamily. Small multidrug resistance (SMR) (TC 2.A.7.1) family. MdtI subfamily. Forms a complex with MdtJ.

The protein resides in the cell inner membrane. Catalyzes the excretion of spermidine. The polypeptide is Spermidine export protein MdtI (Yersinia enterocolitica serotype O:8 / biotype 1B (strain NCTC 13174 / 8081)).